Reading from the N-terminus, the 463-residue chain is ATP synthase subunit beta (463 aa).

152 to 159 (GGAGVGKT) provides a ligand contact to ATP.

It belongs to the ATPase alpha/beta chains family. In terms of assembly, F-type ATPases have 2 components, CF(1) - the catalytic core - and CF(0) - the membrane proton channel. CF(1) has five subunits: alpha(3), beta(3), gamma(1), delta(1), epsilon(1). CF(0) has three main subunits: a(1), b(2) and c(9-12). The alpha and beta chains form an alternating ring which encloses part of the gamma chain. CF(1) is attached to CF(0) by a central stalk formed by the gamma and epsilon chains, while a peripheral stalk is formed by the delta and b chains.

Its subcellular location is the cell membrane. It carries out the reaction ATP + H2O + 4 H(+)(in) = ADP + phosphate + 5 H(+)(out). Its function is as follows. Produces ATP from ADP in the presence of a proton gradient across the membrane. The catalytic sites are hosted primarily by the beta subunits. The protein is ATP synthase subunit beta of Clostridium botulinum (strain Eklund 17B / Type B).